The primary structure comprises 266 residues: MSSWAITGASRGIGFEFAKQLSADGSNQVFALIRSEPSAELAELSSGRENLHVIQADVTDAQGLSEAAAKVGELTGNKLDVFISNACHPGLDLRFHPTSAFLGKEKELKEEIDACMNVNLLGAINSINCFLPLIRNGELKKIIYITSPSGDAEFTRKCGVTVTVGYSITKAAMNLVMSKYAAELKGEGIKTLSLSPGWVDTDGTRDMAPTPEILEMALQVFQKFKPDLTGLMSVEESVRMQLNVINGLTVKQSGLALSHHGDYNWL.

Residues Ile13, Asp57, and Asn85 each coordinate NADP(+). Catalysis depends on proton donor residues Ser147 and Tyr166. Residues Tyr166, Lys170, Val199, and Thr201 each contribute to the NADP(+) site. Lys170 acts as the Lowers pKa of active site Tyr in catalysis.

This sequence belongs to the short-chain dehydrogenases/reductases (SDR) family.

It participates in secondary metabolite biosynthesis; terpenoid biosynthesis. Short-chain dehydrogenase/reductase; part of the gene cluster that mediates the biosynthesis of the meroterpenoids arthripenoids. The pathway begins with the HR-PKS atnH that catalyzes two chain-extension steps to form a reduced triketide, which then primes the SAT domain in the NR-PKS atnG to initiate three more cycles of extension to give a linear hexaketide corresponding to the polyketide part of arthripenoids. The FAD-dependent monooxygenase atnJ then performs an oxidative decarboxylation at C11 of the atnH/atnG product, via an electrophilic aromatic hydroxylation with concomitant ipso-decarboxylation. The membrane-bound polyprenyl transferase atnF then introduces a farnesyl group before the FAD-dependent monooxygenase atnK functions as the first epoxidase on terminal C12'-C13' olefin, followed by a second epoxidation on C7'-C8' catalyzed by atnA. The terpene cyclase/mutase atnI then initiates the sequential tricyclic ring formation through protonation of the terminal epoxide and catalyzes the regioselective and stereoselective 6/6/6-tricyclic ring formation. The cytochrome P450 monooxygenase atnM is responsible for hydroxylating both C1' and C10'. The next steps may involve ketoreduction and acetyl transfer by the ketoreductase atnB and the acetyltransferase atnC, and lead to the production of arthripenoid B, the final biosynthetic product of the atn cluster. The hydroquinone moiety in arthripenoid B is prone to undergo spontaneous oxidation to afford a benzoquinone compound, a key intermediate for generating structure diversity. For instance, addition of a cysteine followed by ring contraction gives arthripenoid A, tautomerization gives the main product arthripenoid C, addition of a molecular of water or amine affords arthripenoid D or E, respectively, and loss of one water forms arthripenoid F. This is Short-chain dehydrogenase/reductase atnB from Arthrinium sp.